The primary structure comprises 281 residues: Pantothenate synthetase (281 aa).

26 to 33 is an ATP binding site; it reads MGYLHQGH. The active-site Proton donor is H33. Q57 is a binding site for (R)-pantoate. Q57 is a binding site for beta-alanine. Residue 143–146 participates in ATP binding; that stretch reads GQKD. Q149 is a binding site for (R)-pantoate. Residues V172 and 180-183 contribute to the ATP site; that span reads LSSR.

This sequence belongs to the pantothenate synthetase family. In terms of assembly, homodimer.

The protein resides in the cytoplasm. It carries out the reaction (R)-pantoate + beta-alanine + ATP = (R)-pantothenate + AMP + diphosphate + H(+). It functions in the pathway cofactor biosynthesis; (R)-pantothenate biosynthesis; (R)-pantothenate from (R)-pantoate and beta-alanine: step 1/1. Catalyzes the condensation of pantoate with beta-alanine in an ATP-dependent reaction via a pantoyl-adenylate intermediate. In Chloroflexus aurantiacus (strain ATCC 29366 / DSM 635 / J-10-fl), this protein is Pantothenate synthetase.